The chain runs to 174 residues: CASP-like protein 1 (174 aa).

Residues Met-1–Thr-25 form a disordered region. Over Met-1 to Gly-46 the chain is Cytoplasmic. Residues Ser-8–Asn-18 show a composition bias toward polar residues. A helical transmembrane segment spans residues Val-47 to Ala-67. Residues Thr-68–Thr-96 lie on the Extracellular side of the membrane. A helical membrane pass occupies residues Phe-97 to Ile-117. At Ala-118–Thr-119 the chain is on the cytoplasmic side. A helical transmembrane segment spans residues Ile-120–Phe-139. Residues Asn-140–Val-150 lie on the Extracellular side of the membrane. The chain crosses the membrane as a helical span at residues Val-151 to Ile-171. At Arg-172–His-174 the chain is on the cytoplasmic side.

The protein belongs to the Casparian strip membrane proteins (CASP) family. Homodimer and heterodimers.

The protein localises to the cell membrane. The polypeptide is CASP-like protein 1 (Triphysaria pusilla (Dwarf owl's-clover)).